The chain runs to 467 residues: Mitochondrial adenyl nucleotide antiporter SLC25A23 (467 aa).

The interval Met-1–Asn-148 is regulatory N-terminal domain. Over Met-1–Gln-187 the chain is Mitochondrial intermembrane. 3 EF-hand domains span residues Glu-9–Gly-44, Glu-76–Ser-111, and Ile-112–Glu-147. 5 residues coordinate Ca(2+): Asp-22, Asn-24, Asp-26, Arg-28, and Glu-33. Residues Ala-39–Pro-61 are disordered. Asp-89, Asn-91, Asp-93, His-95, and Glu-100 together coordinate Ca(2+). The linker region stretch occupies residues Val-149–His-158. Residues Ile-164–Arg-467 are C-terminal transmembrane transporter domain. Solcar repeat units follow at residues Gly-182–Ala-268, Leu-276–Arg-361, and Pro-373–Ala-461. Residues Leu-188 to Leu-205 form a helical membrane-spanning segment. At Asp-206–Arg-242 the chain is on the mitochondrial matrix side. A helical transmembrane segment spans residues Gly-243–Tyr-262. The Mitochondrial intermembrane segment spans residues Glu-263–Gly-285. Residues Ser-286–Met-299 form a helical membrane-spanning segment. Over Glu-300–Arg-335 the chain is Mitochondrial matrix. The chain crosses the membrane as a helical span at residues Gly-336–Tyr-355. Topologically, residues Glu-356–Leu-378 are mitochondrial intermembrane. Residues Leu-379 to Leu-396 traverse the membrane as a helical segment. Residues Ala-397–Arg-435 lie on the Mitochondrial matrix side of the membrane. The helical transmembrane segment at Gly-436 to Tyr-455 threads the bilayer. Topologically, residues Glu-456 to Arg-467 are mitochondrial intermembrane.

It belongs to the mitochondrial carrier (TC 2.A.29) family. In terms of assembly, interacts with MCU. Interacts with MICU1.

It localises to the mitochondrion inner membrane. It carries out the reaction Mg(2+)(out) + phosphate(in) + ATP(out) = Mg(2+)(in) + phosphate(out) + ATP(in). It catalyses the reaction ADP(out) + phosphate(in) + H(+)(out) = ADP(in) + phosphate(out) + H(+)(in). The enzyme catalyses AMP(out) + phosphate(in) = AMP(in) + phosphate(out). The catalysed reaction is phosphate(in) + ATP(out) + 2 H(+)(out) = phosphate(out) + ATP(in) + 2 H(+)(in). It carries out the reaction dADP(in) + ADP(out) = dADP(out) + ADP(in). It catalyses the reaction Mg(2+)(in) + ADP(out) + ATP(in) + H(+)(out) = Mg(2+)(out) + ADP(in) + ATP(out) + H(+)(in). The enzyme catalyses ADP(out) + diphosphate(in) = ADP(in) + diphosphate(out). The catalysed reaction is dAMP(in) + ADP(out) + H(+)(out) = dAMP(out) + ADP(in) + H(+)(in). It carries out the reaction 3'-AMP(in) + ADP(out) + H(+)(out) = 3'-AMP(out) + ADP(in) + H(+)(in). It catalyses the reaction dAMP(out) + phosphate(in) = dAMP(in) + phosphate(out). The enzyme catalyses 3'-AMP(out) + phosphate(in) = 3'-AMP(in) + phosphate(out). The catalysed reaction is dADP(out) + phosphate(in) + H(+)(out) = dADP(in) + phosphate(out) + H(+)(in). Its activity is regulated as follows. Activated by an increase in cytosolic calcium levels that induce a conformational change of the N-terminal regulatory domain, uncapping the channel and allowing transport. Electroneutral antiporter that mediates the transport of adenine nucleotides through the inner mitochondrial membrane. Originally identified as an ATP-magnesium/inorganic phosphate antiporter, it also acts as a broad specificity adenyl nucleotide antiporter. By regulating the mitochondrial matrix adenine nucleotide pool could adapt to changing cellular energetic demands and indirectly regulate adenine nucleotide-dependent metabolic pathways. Also acts as a regulator of mitochondrial calcium uptake and can probably transport trace amounts of other divalent metal cations in complex with ATP. In vitro, a low activity is also observed with guanyl and pyrimidine nucleotides. The protein is Mitochondrial adenyl nucleotide antiporter SLC25A23 of Mus musculus (Mouse).